The chain runs to 752 residues: DNA topoisomerase 4 subunit A (752 aa).

The region spanning 31 to 494 is the Topo IIA-type catalytic domain; it reads LPFIGDGLKP…EAKAMSEHDM (464 aa). Residue Tyr-120 is the O-(5'-phospho-DNA)-tyrosine intermediate of the active site. The disordered stretch occupies residues 472-492; sequence YGDDRRSPLREREEAKAMSEH. The segment covering 473 to 492 has biased composition (basic and acidic residues); that stretch reads GDDRRSPLREREEAKAMSEH.

It belongs to the type II topoisomerase GyrA/ParC subunit family. ParC type 1 subfamily. As to quaternary structure, heterotetramer composed of ParC and ParE.

The protein resides in the cell membrane. It carries out the reaction ATP-dependent breakage, passage and rejoining of double-stranded DNA.. Functionally, topoisomerase IV is essential for chromosome segregation. It relaxes supercoiled DNA. Performs the decatenation events required during the replication of a circular DNA molecule. The chain is DNA topoisomerase 4 subunit A from Salmonella typhimurium (strain LT2 / SGSC1412 / ATCC 700720).